A 314-amino-acid chain; its full sequence is Carbamate kinase (314 aa).

It belongs to the carbamate kinase family. In terms of assembly, homodimer.

It carries out the reaction hydrogencarbonate + NH4(+) + ATP = carbamoyl phosphate + ADP + H2O + H(+). It participates in metabolic intermediate metabolism; carbamoyl phosphate degradation; CO(2) and NH(3) from carbamoyl phosphate: step 1/1. The polypeptide is Carbamate kinase (CBK) (Trichomonas vaginalis).